The following is a 276-amino-acid chain: uncharacterized protein (276 aa).

The N-terminal stretch at 1 to 29 (MKSHVRSFKTYIRDEIIKKGGWVNAHAHA) is a signal peptide.

The protein belongs to the metallo-dependent hydrolases superfamily.

This is an uncharacterized protein from Haemophilus influenzae (strain ATCC 51907 / DSM 11121 / KW20 / Rd).